Reading from the N-terminus, the 465-residue chain is DEAD-box ATP-dependent RNA helicase 55 (465 aa).

The Q motif motif lies at phenylalanine 17 to alanine 45. A Helicase ATP-binding domain is found at isoleucine 48–lysine 219. An ATP-binding site is contributed by alanine 61–threonine 68. The DEAD box signature appears at aspartate 167–aspartate 170. Residues glutamine 228–glycine 422 form the Helicase C-terminal domain. Residues lysine 413–leucine 465 form a disordered region. Over residues serine 428–lysine 437 the composition is skewed to basic and acidic residues. Residues glutamine 456–leucine 465 show a composition bias toward acidic residues.

It belongs to the DEAD box helicase family. DDX55/SPB4 subfamily.

The enzyme catalyses ATP + H2O = ADP + phosphate + H(+). In Arabidopsis thaliana (Mouse-ear cress), this protein is DEAD-box ATP-dependent RNA helicase 55 (RH55).